A 295-amino-acid chain; its full sequence is MSGALDVLQMKEEDVLKFLAAGTHLGGTNLDFQMEQYIYKRKSDGIYIINLKRTWEKLLLAARAIVAIENPADVSVISSRNTGQRAVLKFAAATGATPIAGRFTPGTFTNQIQAAFREPRLLVVTDPRADHQPLTEASYVNLPTIALCNTDSPLRYVDIAIPCNNKGAHSVGLMWWMLAREVLRMRGTISREHPWEVMPDLYFYRDPEEIEKEEQAAAEKAVTKEEFQGEWTAPAPEFTAAQPEVADWSEGVQVPSVPIQQFPTEDWSAQPSTEDWSAAPTAQATEWVGTTTEWS.

N-acetylserine is present on Ser2. Phosphoserine is present on Ser43. Position 52 is an N6-acetyllysine (Lys52). The segment at 54-113 (TWEKLLLAARAIVAIENPADVSVISSRNTGQRAVLKFAAATGATPIAGRFTPGTFTNQIQ) is interaction with PPP1R16B. Lys89 carries the N6-acetyllysine; alternate modification. Lys89 is covalently cross-linked (Glycyl lysine isopeptide (Lys-Gly) (interchain with G-Cter in SUMO2); alternate). Thr97 carries the post-translational modification Phosphothreonine. Laminin-binding regions lie at residues 161–180 (IPCNNKGAHSVGLMWWMLAR) and 205–229 (RDPEEIEKEEQAAAEKAVTKEEFQG). [DE]-W-[ST] repeat units lie at residues 230 to 232 (EWT), 247 to 249 (DWS), 266 to 268 (DWS), 275 to 277 (DWS), and 293 to 295 (EWS). The interval 242–295 (QPEVADWSEGVQVPSVPIQQFPTEDWSAQPSTEDWSAAPTAQATEWVGTTTEWS) is laminin-binding. The disordered stretch occupies residues 266 to 295 (DWSAQPSTEDWSAAPTAQATEWVGTTTEWS).

It belongs to the universal ribosomal protein uS2 family. In terms of assembly, monomer (37LRP) and homodimer (67LR). Component of the small ribosomal subunit. Mature ribosomes consist of a small (40S) and a large (60S) subunit. The 40S subunit contains about 33 different proteins and 1 molecule of RNA (18S). The 60S subunit contains about 49 different proteins and 3 molecules of RNA (28S, 5.8S and 5S). Interacts with RPS21. Interacts with several laminins including at least LAMB1. Interacts with MDK. The mature dimeric form interacts with PPP1R16B (via its fourth ankyrin repeat). Interacts with PPP1CA only in the presence of PPP1R16B. Post-translationally, acylated. Acylation may be a prerequisite for conversion of the monomeric 37 kDa laminin receptor precursor (37LRP) to the mature dimeric 67 kDa laminin receptor (67LR), and may provide a mechanism for membrane association. Cleaved by stromelysin-3 (ST3) at the cell surface. Cleavage by stromelysin-3 may be a mechanism to alter cell-extracellular matrix interactions.

The protein resides in the cell membrane. It is found in the cytoplasm. The protein localises to the nucleus. Functionally, required for the assembly and/or stability of the 40S ribosomal subunit. Required for the processing of the 20S rRNA-precursor to mature 18S rRNA in a late step of the maturation of 40S ribosomal subunits. Also functions as a cell surface receptor for laminin. Plays a role in cell adhesion to the basement membrane and in the consequent activation of signaling transduction pathways. May play a role in cell fate determination and tissue morphogenesis. Also acts as a receptor for several other ligands, including the pathogenic prion protein, viruses, and bacteria. Acts as a PPP1R16B-dependent substrate of PPP1CA. The sequence is that of Small ribosomal subunit protein uS2 from Bos taurus (Bovine).